Reading from the N-terminus, the 425-residue chain is WD repeat-containing protein JIP5 (425 aa).

WD repeat units lie at residues 9–48, 71–110, 117–158, 219–262, and 321–358; these read QLDSDLFAQAIHPEEPIVAVGLASGHVQTYRLPPGASDDS, RHKGSCRTLAFSVDGSSLYSAGTDGIVKVADTTTGRVTAK, LANG…AKSA, ELLS…DQDE, and LRQEGVIGLGFDVTGRMVSGGGKKLNIWGEKTWQDVPE. The interval 354 to 425 is disordered; the sequence is QDVPEDDEDE…HGILHFSGLA (72 aa). Composition is skewed to acidic residues over residues 356–368 and 378–396; these read VPEDDEDEQEEEA and SDEDEDSDEDMEESSEDDE. Positions 399–414 are enriched in basic residues; the sequence is QKRKKRRKGKGGKQAK.

Belongs to the WD repeat WDR55 family.

It localises to the nucleus. The protein resides in the nucleolus. The protein is WD repeat-containing protein JIP5 (JIP5) of Phaeosphaeria nodorum (strain SN15 / ATCC MYA-4574 / FGSC 10173) (Glume blotch fungus).